A 2407-amino-acid polypeptide reads, in one-letter code: Daf-12-interacting protein 1 (2407 aa).

Over residues Q90 to A112 the composition is skewed to low complexity. The disordered stretch occupies residues Q90–R152. The region spanning C277–N335 is the RRM domain. Disordered regions lie at residues E439–D632, A737–L767, L785–A849, P874–V896, L921–A986, R993–V1012, S1025–E1844, I1858–H1918, L1932–D1976, E2077–A2103, and S2172–N2200. A compositionally biased stretch (polar residues) spans R443–G456. Residues E512–V529 are compositionally biased toward acidic residues. 3 stretches are compositionally biased toward basic and acidic residues: residues S530–K541, G548–E564, and S573–E586. A compositionally biased stretch (polar residues) spans A587–P603. A compositionally biased stretch (low complexity) spans S618–S627. Polar residues-rich tracts occupy residues T791–S826 and S837–A849. Residues A924 to G946 are compositionally biased toward polar residues. Residues S966–I978 are compositionally biased toward basic and acidic residues. Polar residues predominate over residues S1043–Q1052. Positions P1053–H1070 are enriched in low complexity. Residues K1086–K1153 are compositionally biased toward basic and acidic residues. Residues S1165–D1177 are compositionally biased toward acidic residues. Basic and acidic residues-rich tracts occupy residues L1178 to Q1195, R1218 to Q1227, A1279 to E1293, N1304 to N1320, Q1335 to A1355, and R1376 to D1398. 2 stretches are compositionally biased toward low complexity: residues P1456 to S1471 and T1488 to S1498. The span at S1534 to G1547 shows a compositional bias: polar residues. Residues S1570–D1595 show a composition bias toward low complexity. Composition is skewed to basic and acidic residues over residues S1679–S1691 and E1703–Q1726. The segment covering T1749–Q1770 has biased composition (polar residues). The span at N1792–K1805 shows a compositional bias: basic and acidic residues. A compositionally biased stretch (polar residues) spans P1809–H1826. 2 stretches are compositionally biased toward basic and acidic residues: residues A1827–E1836 and E1873–E1892. Polar residues-rich tracts occupy residues E1895–T1911 and L1932–Q1942. Residues S1962–S1975 show a composition bias toward low complexity. Residues N2049–A2110 are a coiled coil. The span at E2077–R2099 shows a compositional bias: basic and acidic residues. The segment covering P2176–P2186 has biased composition (low complexity). The 171-residue stretch at Q2213 to N2383 folds into the SPOC domain.

As to quaternary structure, isoform d interacts with daf-12. In terms of tissue distribution, isoform d is widely expressed: detected in the hypodermis, seam cells, intestine, somatic gonad, neurons, vulval precursors, body wall muscle and pharynx.

Its subcellular location is the nucleus. In terms of biological role, probable transcriptional corepressor which modulates activity of the nuclear hormone receptor daf-12 to regulate the dauer diapause. In Caenorhabditis elegans, this protein is Daf-12-interacting protein 1.